We begin with the raw amino-acid sequence, 595 residues long: Probable L-gulonolactone oxidase 1 (595 aa).

The signal sequence occupies residues 1–18 (MAFWLSLIFFCFCTFASS). The FAD-binding PCMH-type domain maps to 47–229 (SICEAAKVEY…SQVTFQLQPM (183 aa)).

This sequence belongs to the oxygen-dependent FAD-linked oxidoreductase family. FAD is required as a cofactor.

It catalyses the reaction L-gulono-1,4-lactone + O2 = L-ascorbate + H2O2 + H(+). It functions in the pathway cofactor biosynthesis; L-ascorbate biosynthesis. May be involved in the biosynthesis of ascorbic acid. This is Probable L-gulonolactone oxidase 1 from Arabidopsis thaliana (Mouse-ear cress).